The chain runs to 351 residues: Cytoplasmic dynein 2 light intermediate chain 1 (351 aa).

A disordered region spans residues 303–335 (GTLKAVQDPARDPQYAESEVDEMRVQKDQELEH). Basic and acidic residues predominate over residues 323-335 (DEMRVQKDQELEH).

The protein belongs to the dynein light intermediate chain family. Light intermediate chain of the cytoplasmic dynein complex 2, a multisubunit complex composed at least of eleven different proteins. The cytoplasmic dynein 2 complex consists of two catalytic heavy chains (HCs) and a number of non-catalytic subunits presented by intermediate chains (ICs), light intermediate chains (LICs) and light chains (LCs). Among them, a heavy chain (DYNC2H1), two intermediate chains (DYNC2I2 and DYNC2I1), a light intermediate chain (DYNC2LI1), and a light chain (DYNLT2B) are unique to the dynein-2 complex, but a subset of light chains are also shared by dynein-1 and dynein-2 complexes. Dynein-2 complex is built around two copies of cytoplasmic dynein 2 heavy chain 1 (DYNC2H1). The C-terminal region forms the motor domain, which converts the energy from ATP hydrolysis into movement. Its N-terminal region forms the tail, an extended structure that binds the other subunits and holds the two heavy chains in a homodimer. Interacts with DYNC2H1 (via N-terminus); this interaction stabilizes the dynein-2 complex structure. In terms of tissue distribution, specifically expressed by ciliated cells in brain, lung, spleen, testis and kidney (at protein level). Enriched in the ependymal layer lining the lateral ventricles (at protein level).

It localises to the cytoplasm. Its subcellular location is the cell projection. It is found in the cilium. The protein localises to the cytoskeleton. The protein resides in the cilium basal body. It localises to the cilium axoneme. Its subcellular location is the microtubule organizing center. It is found in the centrosome. Acts as one of several non-catalytic accessory components of the cytoplasmic dynein 2 complex (dynein-2 complex), a motor protein complex that drives the movement of cargos along microtubules within cilia and flagella in concert with the intraflagellar transport (IFT) system, facilitating the assembly of these organelles. Involved in the regulation of ciliary length. The protein is Cytoplasmic dynein 2 light intermediate chain 1 (Dync2li1) of Mus musculus (Mouse).